Here is a 465-residue protein sequence, read N- to C-terminus: E3 ubiquitin-protein ligase TRIM38 (465 aa).

The segment at 16 to 63 adopts an RING-type zinc-finger fold; it reads CSICLSLMTNPVSINCGHSYCHLCITDFFKNPSQKQLRQETFCCPQCR. A Phosphoserine modification is found at S70. The B box-type zinc finger occupies 88-129; the sequence is DQEMSCEEHGEQFHLFCEDEGQLICWRCERAPQHKGHTTALV. Zn(2+) is bound by residues C93, H96, C115, and H121. One can recognise a B30.2/SPRY domain in the interval 274-465; that stretch reads CNVSKLYFDV…SPLFLPPPGD (192 aa).

Interacts (via B30.2/SPRY domain) with TAB2 and TAB3. In terms of tissue distribution, ubiquitous.

The protein localises to the cytoplasm. It catalyses the reaction S-ubiquitinyl-[E2 ubiquitin-conjugating enzyme]-L-cysteine + [acceptor protein]-L-lysine = [E2 ubiquitin-conjugating enzyme]-L-cysteine + N(6)-ubiquitinyl-[acceptor protein]-L-lysine.. It functions in the pathway protein modification; protein ubiquitination. It participates in protein modification; protein sumoylation. Functionally, E3 ubiquitin-protein and E3 SUMO-protein ligase that acts as a regulator of innate immunity. Acts as a negative regulator of type I interferon IFN-beta production by catalyzing 'Lys-48'-linked polyubiquitination of AZI2/NAP1, leading to its degradation. Mediates 'Lys-48'-linked polyubiquitination and proteasomal degradation of the critical TLR adapter TICAM1, inhibiting TLR3-mediated type I interferon signaling. Acts as positive regulator of the cGAS-STING pathway by acting as a E3 SUMO-protein ligase: mediates sumoylation of CGAS and STING, preventing their degradation and thereby activating the innate immune response to DNA virus. Also acts as a negative regulator of NF-kappa-B signaling independently of its E3 protein ligase activity by promoting lysosome-dependent degradation of TAB2 and TAB3 adapters. The protein is E3 ubiquitin-protein ligase TRIM38 of Homo sapiens (Human).